The primary structure comprises 155 residues: Small ribosomal subunit protein uS7c (155 aa).

Belongs to the universal ribosomal protein uS7 family. As to quaternary structure, part of the 30S ribosomal subunit.

The protein localises to the plastid. It localises to the chloroplast. One of the primary rRNA binding proteins, it binds directly to 16S rRNA where it nucleates assembly of the head domain of the 30S subunit. This chain is Small ribosomal subunit protein uS7c (rps7), found in Marchantia polymorpha (Common liverwort).